A 450-amino-acid polypeptide reads, in one-letter code: Glutamyl-tRNA reductase (450 aa).

Substrate-binding positions include 45-48 (TCNR), Ser107, 112-114 (ERE), and Gln118. The Nucleophile role is filled by Cys46. 196–201 (GTGAYA) provides a ligand contact to NADP(+).

The protein belongs to the glutamyl-tRNA reductase family. In terms of assembly, homodimer.

It catalyses the reaction (S)-4-amino-5-oxopentanoate + tRNA(Glu) + NADP(+) = L-glutamyl-tRNA(Glu) + NADPH + H(+). The protein operates within porphyrin-containing compound metabolism; protoporphyrin-IX biosynthesis; 5-aminolevulinate from L-glutamyl-tRNA(Glu): step 1/2. Functionally, catalyzes the NADPH-dependent reduction of glutamyl-tRNA(Glu) to glutamate 1-semialdehyde (GSA). The chain is Glutamyl-tRNA reductase from Micrococcus luteus (strain ATCC 4698 / DSM 20030 / JCM 1464 / CCM 169 / CCUG 5858 / IAM 1056 / NBRC 3333 / NCIMB 9278 / NCTC 2665 / VKM Ac-2230) (Micrococcus lysodeikticus).